The chain runs to 587 residues: MGRGGSRAACAAAAPPWHSLPDEVWEHAFSFLPAAADRGAAAGACSSWLRAERRSRRRLAVANCYAAAPRDAVERFPSVRAAEVKGKPHFADFGLVPPAWGAAAAPWIAAAADGWPLLEELSFKRMVVTDECLEMIAASFRNFQVLRLVSCDGFSTAGLAAIAAGCRHLRELDLQENEIEDCSIHWLSLFPESFTSLVTLNFSCLEGEVNITVLERLVTRCHNLKTLKLNNAIPLDKLASLLHKAPQLVELGTGKFSADYHSDLFAKLEAAFGGCKSLRRLSGAWDAVPDYLPAFYCVCEGLTSLNLSYATVRGPELIKFISRCRNLQQLWVMDLIEDHGLAVVASSCNKLQELRVFPSDPFGAGFLTERGLVDVSASCPMLESVLYFCRRMTNEALITIAKNRPNFTCFRLCILEPHTPDYITREPLDAGFSAIVESCRGLRRLSISGLLTDLVFKSIGAHADRLEMLSIAFAGNSDLGLHYILSGCKSLKKLEIRDCPFGDKPLLANAAKLETMRSLWMSSCLLTLGACRQLARKMPRLSVEIMNDPGRSCPLDSLPDETPVEKLYVYRTIAGPRSDTPACVQIV.

An F-box domain is found at 6–63 (SRAACAAAAPPWHSLPDEVWEHAFSFLPAAADRGAAAGACSSWLRAERRSRRRLAVAN). Lysine 85 lines the 1D-myo-inositol hexakisphosphate pocket. An interaction with auxin-responsive proteins region spans residues 92-93 (DF). 1D-myo-inositol hexakisphosphate-binding positions include 124 to 125 (KR) and arginine 355. Residues 358–363 (PSDPFG) form an interaction with auxin-responsive proteins region. 409–411 (CFR) is a binding site for 1D-myo-inositol hexakisphosphate. Positions 413–417 (CILEP) are interaction with auxin-responsive proteins. Arginine 444 contributes to the 1D-myo-inositol hexakisphosphate binding site. Residues 472-473 (AF) are interaction with auxin-responsive proteins. 1D-myo-inositol hexakisphosphate-binding positions include 492–493 (KK) and arginine 517.

In terms of assembly, part of a SCF (SKP1-cullin-F-box) protein ligase complex. May interact with auxin and auxin-responsive proteins.

Its subcellular location is the nucleus. It participates in protein modification; protein ubiquitination. In Oryza sativa subsp. japonica (Rice), this protein is Transport inhibitor response 1-like protein Os05g0150500.